The primary structure comprises 200 residues: DNA-directed RNA polymerase subunit 7-like protein (200 aa).

The protein belongs to the eukaryotic RPB7/RPC8 RNA polymerase subunit family.

The protein resides in the nucleus. This Arabidopsis thaliana (Mouse-ear cress) protein is DNA-directed RNA polymerase subunit 7-like protein (NRPB7L).